The primary structure comprises 112 residues: Urease subunit beta (112 aa).

This sequence belongs to the urease beta subunit family. Heterotrimer of UreA (gamma), UreB (beta) and UreC (alpha) subunits. Three heterotrimers associate to form the active enzyme.

The protein localises to the cytoplasm. The catalysed reaction is urea + 2 H2O + H(+) = hydrogencarbonate + 2 NH4(+). It functions in the pathway nitrogen metabolism; urea degradation; CO(2) and NH(3) from urea (urease route): step 1/1. The sequence is that of Urease subunit beta from Thioalkalivibrio sulfidiphilus (strain HL-EbGR7).